The chain runs to 534 residues: DM7 family protein GE17491 (534 aa).

It belongs to the DM7 family.

This Drosophila yakuba (Fruit fly) protein is DM7 family protein GE17491.